An 825-amino-acid polypeptide reads, in one-letter code: Ent-copalyl diphosphate synthase 2, chloroplastic (825 aa).

Residues 1-70 (MVLSSSCTTV…KGSSLTPIVR (70 aa)) constitute a chloroplast transit peptide. K241 contacts substrate. A DXDD motif motif is present at residues 373–376 (EVDD). Residue K459 coordinates substrate.

This sequence belongs to the terpene synthase family. Tpsc subfamily. It depends on Mg(2+) as a cofactor. In terms of tissue distribution, expressed in tassels.

The protein resides in the plastid. Its subcellular location is the chloroplast. The enzyme catalyses (2E,6E,10E)-geranylgeranyl diphosphate = ent-copalyl diphosphate. Its pathway is plant hormone biosynthesis; gibberellin biosynthesis. Its function is as follows. Involved in gibberellin biosynthesis. Catalyzes the conversion of geranylgeranyl diphosphate to the gibberellin precursor ent-copalyl diphosphate (ent-CPP). Involved in the production of antifungal dolabralexin phytoalexins in response to biotic and abiotic stresses. In response to fungal infection and in associtation with KSL4, is involved in the production dolabradiene, a type of antifungal phytoalexin. The chain is Ent-copalyl diphosphate synthase 2, chloroplastic from Zea mays (Maize).